Consider the following 446-residue polypeptide: Bifunctional protein GlmU (446 aa).

Residues 1–229 (MTEKPVALIV…EAETLGINTR (229 aa)) form a pyrophosphorylase region. UDP-N-acetyl-alpha-D-glucosamine contacts are provided by residues 11-14 (LAAG), K25, Q78, 83-84 (GT), 106-108 (YGD), G141, E155, N170, and N227. D108 is a binding site for Mg(2+). Residue N227 coordinates Mg(2+). A linker region spans residues 230–250 (AELAAAEAAFQVRARARALED). An N-acetyltransferase region spans residues 251-446 (GVTMTDPATV…MQALRQKKGN (196 aa)). Positions 316 and 334 each coordinate UDP-N-acetyl-alpha-D-glucosamine. The active-site Proton acceptor is H346. Residues Y349 and N360 each contribute to the UDP-N-acetyl-alpha-D-glucosamine site. Residues A363, 369 to 370 (NY), S388, S406, and R423 each bind acetyl-CoA.

The protein in the N-terminal section; belongs to the N-acetylglucosamine-1-phosphate uridyltransferase family. This sequence in the C-terminal section; belongs to the transferase hexapeptide repeat family. Homotrimer. Mg(2+) is required as a cofactor.

It localises to the cytoplasm. It carries out the reaction alpha-D-glucosamine 1-phosphate + acetyl-CoA = N-acetyl-alpha-D-glucosamine 1-phosphate + CoA + H(+). The catalysed reaction is N-acetyl-alpha-D-glucosamine 1-phosphate + UTP + H(+) = UDP-N-acetyl-alpha-D-glucosamine + diphosphate. It functions in the pathway nucleotide-sugar biosynthesis; UDP-N-acetyl-alpha-D-glucosamine biosynthesis; N-acetyl-alpha-D-glucosamine 1-phosphate from alpha-D-glucosamine 6-phosphate (route II): step 2/2. It participates in nucleotide-sugar biosynthesis; UDP-N-acetyl-alpha-D-glucosamine biosynthesis; UDP-N-acetyl-alpha-D-glucosamine from N-acetyl-alpha-D-glucosamine 1-phosphate: step 1/1. Its pathway is bacterial outer membrane biogenesis; LPS lipid A biosynthesis. In terms of biological role, catalyzes the last two sequential reactions in the de novo biosynthetic pathway for UDP-N-acetylglucosamine (UDP-GlcNAc). The C-terminal domain catalyzes the transfer of acetyl group from acetyl coenzyme A to glucosamine-1-phosphate (GlcN-1-P) to produce N-acetylglucosamine-1-phosphate (GlcNAc-1-P), which is converted into UDP-GlcNAc by the transfer of uridine 5-monophosphate (from uridine 5-triphosphate), a reaction catalyzed by the N-terminal domain. This is Bifunctional protein GlmU from Paracoccus denitrificans (strain Pd 1222).